We begin with the raw amino-acid sequence, 668 residues long: tRNA 5-methylaminomethyl-2-thiouridine biosynthesis bifunctional protein MnmC (668 aa).

The tract at residues 1–245 (MKHYSIQPAN…KREMLCGVME (245 aa)) is tRNA (mnm(5)s(2)U34)-methyltransferase. The segment at 270-668 (IGGGIACALL…LLKGKAVKAG (399 aa)) is FAD-dependent cmnm(5)s(2)U34 oxidoreductase.

This sequence in the N-terminal section; belongs to the methyltransferase superfamily. tRNA (mnm(5)s(2)U34)-methyltransferase family. It in the C-terminal section; belongs to the DAO family. FAD serves as cofactor.

It localises to the cytoplasm. It carries out the reaction 5-aminomethyl-2-thiouridine(34) in tRNA + S-adenosyl-L-methionine = 5-methylaminomethyl-2-thiouridine(34) in tRNA + S-adenosyl-L-homocysteine + H(+). Catalyzes the last two steps in the biosynthesis of 5-methylaminomethyl-2-thiouridine (mnm(5)s(2)U) at the wobble position (U34) in tRNA. Catalyzes the FAD-dependent demodification of cmnm(5)s(2)U34 to nm(5)s(2)U34, followed by the transfer of a methyl group from S-adenosyl-L-methionine to nm(5)s(2)U34, to form mnm(5)s(2)U34. The sequence is that of tRNA 5-methylaminomethyl-2-thiouridine biosynthesis bifunctional protein MnmC from Shigella boydii serotype 4 (strain Sb227).